Consider the following 264-residue polypeptide: MRQYLQLLEDILENGVEKEDRTGVGTLSVFGRQLRFNLQDGFPLVTTKKLHIRSIIYELLWFLKGDTNVRYLQENGVTIWDEWADENGDLGPVYGAQWRSWKGADGKTVDQIASVVEEIKRNPNSRRLLVNAWNVAELDKMKLPPCHYAFQFYVANGRLSCMWQQRSVDTFLGLPFNIASYALLTHMIAEQCGLDVGELIFTGGDVHLYKNHIEQAKLQLTREPRPLPKLVLKRKPSSIFDYEYDDFEIVGYDPHPTIKAPVAV.

DUMP is bound at residue Arg-21. (6R)-5,10-methylene-5,6,7,8-tetrahydrofolate is bound at residue His-51. Arg-126–Arg-127 serves as a coordination point for dUMP. The Nucleophile role is filled by Cys-146. DUMP-binding positions include Arg-166–Asp-169, Asn-177, and His-207–Tyr-209. (6R)-5,10-methylene-5,6,7,8-tetrahydrofolate is bound at residue Asp-169. Ala-263 provides a ligand contact to (6R)-5,10-methylene-5,6,7,8-tetrahydrofolate.

It belongs to the thymidylate synthase family. Bacterial-type ThyA subfamily. Homodimer.

Its subcellular location is the cytoplasm. The enzyme catalyses dUMP + (6R)-5,10-methylene-5,6,7,8-tetrahydrofolate = 7,8-dihydrofolate + dTMP. The protein operates within pyrimidine metabolism; dTTP biosynthesis. Functionally, catalyzes the reductive methylation of 2'-deoxyuridine-5'-monophosphate (dUMP) to 2'-deoxythymidine-5'-monophosphate (dTMP) while utilizing 5,10-methylenetetrahydrofolate (mTHF) as the methyl donor and reductant in the reaction, yielding dihydrofolate (DHF) as a by-product. This enzymatic reaction provides an intracellular de novo source of dTMP, an essential precursor for DNA biosynthesis. This Geobacillus thermodenitrificans (strain NG80-2) protein is Thymidylate synthase.